Here is a 224-residue protein sequence, read N- to C-terminus: Beta-casein (224 aa).

The N-terminal stretch at 1–15 (MKVLILACLVALALA) is a signal peptide. 4 positions are modified to phosphoserine: Ser-30, Ser-32, Ser-33, and Ser-34. At Ser-50 the chain carries Phosphoserine; in variant A1, variant A2, variant A3, variant B, variant E, variant F, variant G and variant H.

It belongs to the beta-casein family. In terms of tissue distribution, mammary gland specific. Secreted in milk.

The protein localises to the secreted. Functionally, important role in determination of the surface properties of the casein micelles. Casoparan acts as a macrophage activator, increasing the phagocytic activity of macrophages and peroxide release from macrophages. It also acts as a bradykinin-potentiating peptide. In terms of biological role, casohypotensin acts as a bradykinin-potentiating peptide. Induces hypotension in rats. Acts as a strong competitive inhibitor of endo-oligopeptidase A. Its function is as follows. Antioxidant peptide has antioxidant activity. In Bos taurus (Bovine), this protein is Beta-casein (CSN2).